Reading from the N-terminus, the 345-residue chain is MISPVLILFSSFLCHVAIAGRTCPKPDDLPFSTVVPLKTFYEPGEEITYSCKPGYVSRGGMRKFICPLTGLWPINTLKCTPRVCPFAGILENGAVRYTTFEYPNTISFSCNTGFYLNGADSAKCTEEGKWSPELPVCAPITCPPPSIPTFATLHVYKPSAGNNSLYRDTAVFECLPQHAMFGNDTITCTTHGNWTKLPECREVKCPFPSRPDNGFVNYPAKPTLYYKDKATFGCHDGYSLDGPEEIECTKLGNWSAMPSCKASCKVPVKKATVVYQGERVKIQEKFKNGMLHGDKVSFFCKNKEKKCSYTEDAQCIDGTIEVPKCFKEHSSLAFWKTDASDVKPC.

The first 19 residues, 1-19 (MISPVLILFSSFLCHVAIA), serve as a signal peptide directing secretion. 4 consecutive Sushi domains span residues 21 to 81 (RTCP…KCTP), 82 to 139 (RVCP…VCAP), 140 to 202 (ITCP…ECRE), and 203 to 262 (VKCP…SCKA). Cystine bridges form between C23/C66, C51/C79, C84/C124, C110/C137, C142/C188, C174/C200, C205/C248, C234/C260, C264/C315, C300/C325, and C307/C345. A glycan (O-linked (GalNAc...) threonine) is linked at T33. T149 carries O-linked (GalNAc...) threonine glycosylation. N-linked (GlcNAc...) asparagine glycosylation is found at N162, N183, and N193. N253 carries N-linked (GlcNAc...) asparagine glycosylation. Residues 263–345 (SCKVPVKKAT…KTDASDVKPC (83 aa)) are sushi-like.

Expressed by the liver and secreted in plasma.

It localises to the secreted. Binds to various kinds of negatively charged substances such as heparin, phospholipids, and dextran sulfate. May prevent activation of the intrinsic blood coagulation cascade by binding to phospholipids on the surface of damaged cells. This Pan troglodytes (Chimpanzee) protein is Beta-2-glycoprotein 1 (APOH).